Consider the following 570-residue polypeptide: Sulfite reductase [NADPH] hemoprotein beta-component (570 aa).

Cys-434, Cys-440, Cys-479, and Cys-483 together coordinate [4Fe-4S] cluster. Residue Cys-483 participates in siroheme binding.

The protein belongs to the nitrite and sulfite reductase 4Fe-4S domain family. Alpha(8)-beta(8). The alpha component is a flavoprotein, the beta component is a hemoprotein. Requires siroheme as cofactor. It depends on [4Fe-4S] cluster as a cofactor.

The enzyme catalyses hydrogen sulfide + 3 NADP(+) + 3 H2O = sulfite + 3 NADPH + 4 H(+). Its pathway is sulfur metabolism; hydrogen sulfide biosynthesis; hydrogen sulfide from sulfite (NADPH route): step 1/1. Functionally, component of the sulfite reductase complex that catalyzes the 6-electron reduction of sulfite to sulfide. This is one of several activities required for the biosynthesis of L-cysteine from sulfate. In Escherichia coli O1:K1 / APEC, this protein is Sulfite reductase [NADPH] hemoprotein beta-component.